The chain runs to 130 residues: Histone H2A type 2-B (130 aa).

The interval 1-22 is disordered; it reads MSGRGKQGGKARAKAKSRSSRA. At serine 2 the chain carries N-acetylserine. Serine 2 carries the phosphoserine; by RPS6KA5 modification. A Citrulline; alternate modification is found at arginine 4. Residue arginine 4 is modified to Symmetric dimethylarginine; by PRMT5; alternate. The residue at position 6 (lysine 6) is an N6-(2-hydroxyisobutyryl)lysine. Basic residues predominate over residues 7–19; the sequence is QGGKARAKAKSRS. N6-(2-hydroxyisobutyryl)lysine; alternate is present on lysine 10. 2 positions are modified to N6-(beta-hydroxybutyryl)lysine; alternate: lysine 10 and lysine 14. Residue lysine 10 is modified to N6-lactoyllysine; alternate. An N6-succinyllysine; alternate modification is found at lysine 10. Residue lysine 14 forms a Glycyl lysine isopeptide (Lys-Gly) (interchain with G-Cter in ubiquitin); alternate linkage. Lysine 16 participates in a covalent cross-link: Glycyl lysine isopeptide (Lys-Gly) (interchain with G-Cter in ubiquitin). Position 37 is an N6-(2-hydroxyisobutyryl)lysine; alternate (lysine 37). Lysine 37 bears the N6-(beta-hydroxybutyryl)lysine; alternate mark. N6-crotonyllysine; alternate is present on lysine 37. 2 positions are modified to N6-(2-hydroxyisobutyryl)lysine: lysine 75 and lysine 76. N6-(2-hydroxyisobutyryl)lysine; alternate is present on lysine 96. Lysine 96 carries the N6-(beta-hydroxybutyryl)lysine; alternate modification. The residue at position 96 (lysine 96) is an N6-succinyllysine; alternate. N6-glutaryllysine; alternate is present on lysine 96. Residue glutamine 105 is modified to N5-methylglutamine. At lysine 119 the chain carries N6-(2-hydroxyisobutyryl)lysine; alternate. Lysine 119 bears the N6-(beta-hydroxybutyryl)lysine; alternate mark. An N6-crotonyllysine; alternate mark is found at lysine 119 and lysine 120. Lysine 119 and lysine 120 each carry N6-glutaryllysine; alternate. Lysine 120 is covalently cross-linked (Glycyl lysine isopeptide (Lys-Gly) (interchain with G-Cter in ubiquitin); alternate). Phosphothreonine; by DCAF1 is present on threonine 121.

This sequence belongs to the histone H2A family. As to quaternary structure, the nucleosome is a histone octamer containing two molecules each of H2A, H2B, H3 and H4 assembled in one H3-H4 heterotetramer and two H2A-H2B heterodimers. The octamer wraps approximately 147 bp of DNA. Deiminated on Arg-4 in granulocytes upon calcium entry. Post-translationally, monoubiquitination of Lys-120 (H2AK119Ub) by RING1, TRIM37 and RNF2/RING2 complex gives a specific tag for epigenetic transcriptional repression and participates in X chromosome inactivation of female mammals. It is involved in the initiation of both imprinted and random X inactivation. Ubiquitinated H2A is enriched in inactive X chromosome chromatin. Ubiquitination of H2A functions downstream of methylation of 'Lys-27' of histone H3 (H3K27me). H2AK119Ub by RNF2/RING2 can also be induced by ultraviolet and may be involved in DNA repair. Monoubiquitination of Lys-120 (H2AK119Ub) by TRIM37 may promote transformation of cells in a number of breast cancers. Following DNA double-strand breaks (DSBs), it is ubiquitinated through 'Lys-63' linkage of ubiquitin moieties by the E2 ligase UBE2N and the E3 ligases RNF8 and RNF168, leading to the recruitment of repair proteins to sites of DNA damage. Ubiquitination at Lys-14 and Lys-16 (H2AK13Ub and H2AK15Ub, respectively) in response to DNA damage is initiated by RNF168 that mediates monoubiquitination at these 2 sites, and 'Lys-63'-linked ubiquitin are then conjugated to monoubiquitin; RNF8 is able to extend 'Lys-63'-linked ubiquitin chains in vitro. Deubiquitinated by USP51 at Lys-14 and Lys-16 (H2AK13Ub and H2AK15Ub, respectively) after damaged DNA is repaired. H2AK119Ub and ionizing radiation-induced 'Lys-63'-linked ubiquitination (H2AK13Ub and H2AK15Ub) are distinct events. In terms of processing, phosphorylation on Ser-2 (H2AS1ph) is enhanced during mitosis. Phosphorylation on Ser-2 by RPS6KA5/MSK1 directly represses transcription. Acetylation of H3 inhibits Ser-2 phosphorylation by RPS6KA5/MSK1. Phosphorylation at Thr-121 (H2AT120ph) by DCAF1 is present in the regulatory region of many tumor suppresor genes and down-regulates their transcription. Symmetric dimethylation on Arg-4 by the PRDM1/PRMT5 complex may play a crucial role in the germ-cell lineage. Post-translationally, glutamine methylation at Gln-105 (H2AQ104me) by FBL is specifically dedicated to polymerase I. It is present at 35S ribosomal DNA locus and impairs binding of the FACT complex. In terms of processing, crotonylation (Kcr) is specifically present in male germ cells and marks testis-specific genes in post-meiotic cells, including X-linked genes that escape sex chromosome inactivation in haploid cells. Crotonylation marks active promoters and enhancers and confers resistance to transcriptional repressors. It is also associated with post-meiotically activated genes on autosomes. Lactylated in macrophages by EP300/P300 by using lactoyl-CoA directly derived from endogenous or exogenous lactate, leading to stimulates gene transcription.

It is found in the nucleus. The protein resides in the chromosome. In terms of biological role, core component of nucleosome. Nucleosomes wrap and compact DNA into chromatin, limiting DNA accessibility to the cellular machineries which require DNA as a template. Histones thereby play a central role in transcription regulation, DNA repair, DNA replication and chromosomal stability. DNA accessibility is regulated via a complex set of post-translational modifications of histones, also called histone code, and nucleosome remodeling. In Homo sapiens (Human), this protein is Histone H2A type 2-B.